The chain runs to 730 residues: ATP-binding cassette sub-family D member 1 (730 aa).

4 helical membrane-spanning segments follow: residues 24–44 (AFSYALVTSAILALTIKVTIP), 137–157 (FCLISRTFLSIYVAALEGALV), 169–189 (ALVLLKWFGIAIPATFVNSMI), and 276–296 (ANIITGPALSIGVIALTAHIL). Residues 136–373 (TFCLISRTFL…WFIMLEQFFM (238 aa)) enclose the ABC transmembrane type-1 domain. The ABC transporter domain maps to 505-727 (ISLRAVPVVT…MNSDEEQKGQ (223 aa)). 538 to 545 (GPNGCGKS) is a binding site for ATP.

The protein belongs to the ABC transporter superfamily. ABCD family. Peroxisomal fatty acyl CoA transporter (TC 3.A.1.203) subfamily.

The protein resides in the peroxisome membrane. It catalyses the reaction an acyl-CoA(out) + ATP + H2O = an acyl-CoA(in) + ADP + phosphate + H(+). Functionally, plays a role in the transport of free very-long-chain fatty acids (VLCFAs) as well as their CoA-esters across the peroxisomal membrane by acting as an ATP-specific binding subunit releasing ADP after ATP hydrolysis. Thus, plays a role in regulation of VLCFAs and energy metabolism namely, in the degradation and biosynthesis of fatty acids by beta-oxidation, mitochondrial function and microsomal fatty acid elongation. The sequence is that of ATP-binding cassette sub-family D member 1 from Drosophila melanogaster (Fruit fly).